The primary structure comprises 869 residues: H(+)/Cl(-) exchange transporter 6 (869 aa).

Residues 1–80 (MAGCRGSLCC…KKGRWYEVVK (80 aa)) are Cytoplasmic-facing. The next 2 membrane-spanning stretches (helical) occupy residues 81–113 (WTVV…FGVV) and 128–150 (LSLL…LVLI). Positions 156–160 (GSGIP) match the Selectivity filter part_1 motif. Serine 157 is a binding site for chloride. Residues 159–166 (IPEIKCYL) constitute an intramembrane region (helical). 2 helical membrane passes run 176–194 (RLRT…VAGG) and 200–217 (EGPM…LPQF). The short motif at 198–202 (GKEGP) is the Selectivity filter part_2 element. 2 consecutive intramembrane regions (helical) follow at residues 241–253 (FVSA…IAAA) and 257–265 (PIGATLFSL). Helical transmembrane passes span 277 to 294 (TWKV…LNFF), 335 to 364 (GFFV…YRMR), and 371 to 392 (KLVR…VFVA). Residues asparagine 410, asparagine 422, and asparagine 432 are each glycosylated (N-linked (GlcNAc...) asparagine). Transmembrane regions (helical) follow at residues 462 to 481 (PITL…WTYG) and 487 to 511 (GLFV…KSYI). Residues 487-491 (GLFVP) carry the Selectivity filter part_3 motif. Residue phenylalanine 489 coordinates chloride. Residues 519–533 (GTFSLIGAAALLGGV) constitute an intramembrane region (helical). Residues 534–536 (VRM) constitute an intramembrane region (note=Loop between two helices). An intramembrane region (helical) is located at residues 537–548 (TISLTVILIEST). Residues 549–552 (NEIT) constitute an intramembrane region (note=Loop between two helices). The chain crosses the membrane as a helical span at residues 553–571 (YGLPIMITLMVAKWTGDFF). The Cytoplasmic segment spans residues 572–869 (NKGIYDIHVG…ARLRQHYQTI (298 aa)). Tyrosine 576 serves as a coordination point for chloride. In terms of domain architecture, CBS 1 spans 605–662 (MEPNLTYVYPHTRIQSLVSILRTTVHHAFPVVTENRGNEKEFMKGNQLISNNIKFKKS). 630–632 (HHA) contributes to the ATP binding site. A disordered region spans residues 668–687 (AGEQRRRSQSMKSYPSSELR). Polar residues predominate over residues 677-686 (SMKSYPSSEL). The residue at position 773 (serine 773) is a Phosphoserine. One can recognise a CBS 2 domain in the interval 807-868 (MNPSPFTVSP…QARLRQHYQT (62 aa)). Residue 849–852 (TRHN) coordinates ATP.

The protein belongs to the chloride channel (TC 2.A.49) family. ClC-6/CLCN6 subfamily. Post-translationally, N-glycosylated on several asparagine residues.

Its subcellular location is the late endosome membrane. The catalysed reaction is 2 chloride(in) + H(+)(out) = 2 chloride(out) + H(+)(in). Voltage-gated channel mediating the exchange of chloride ions against protons. Functions as antiporter and contributes to the acidification of the late endosome lumen. The CLC channel family contains both chloride channels and proton-coupled anion transporters that exchange chloride or another anion for protons. The presence of conserved gating glutamate residues is typical for family members that function as antiporters. This chain is H(+)/Cl(-) exchange transporter 6 (CLCN6), found in Oryctolagus cuniculus (Rabbit).